The primary structure comprises 325 residues: Replication factor C small subunit (325 aa).

Residue 52–59 coordinates ATP; it reads GPAGVGKT.

It belongs to the activator 1 small subunits family. RfcS subfamily. As to quaternary structure, heteromultimer composed of small subunits (RfcS) and large subunits (RfcL).

In terms of biological role, part of the RFC clamp loader complex which loads the PCNA sliding clamp onto DNA. The chain is Replication factor C small subunit from Natronomonas pharaonis (strain ATCC 35678 / DSM 2160 / CIP 103997 / JCM 8858 / NBRC 14720 / NCIMB 2260 / Gabara) (Halobacterium pharaonis).